A 625-amino-acid chain; its full sequence is UvrABC system protein C (625 aa).

Residues 13 to 92 (DKPGVYIMKD…IKKHRPKFNI (80 aa)) enclose the GIY-YIG domain. In terms of domain architecture, UVR spans 204–239 (EDIIKKLEKDMKEAADNLEFERAARIRDKINSLKHI).

It belongs to the UvrC family. As to quaternary structure, interacts with UvrB in an incision complex.

The protein resides in the cytoplasm. Functionally, the UvrABC repair system catalyzes the recognition and processing of DNA lesions. UvrC both incises the 5' and 3' sides of the lesion. The N-terminal half is responsible for the 3' incision and the C-terminal half is responsible for the 5' incision. The sequence is that of UvrABC system protein C from Acetivibrio thermocellus (strain ATCC 27405 / DSM 1237 / JCM 9322 / NBRC 103400 / NCIMB 10682 / NRRL B-4536 / VPI 7372) (Clostridium thermocellum).